The following is a 122-amino-acid chain: Small ribosomal subunit protein uS13 (122 aa).

The interval 99 to 122 is disordered; the sequence is RGQRTHTNARTRKGPAKAIAGKKK.

The protein belongs to the universal ribosomal protein uS13 family. As to quaternary structure, part of the 30S ribosomal subunit. Forms a loose heterodimer with protein S19. Forms two bridges to the 50S subunit in the 70S ribosome.

In terms of biological role, located at the top of the head of the 30S subunit, it contacts several helices of the 16S rRNA. In the 70S ribosome it contacts the 23S rRNA (bridge B1a) and protein L5 of the 50S subunit (bridge B1b), connecting the 2 subunits; these bridges are implicated in subunit movement. Contacts the tRNAs in the A and P-sites. The protein is Small ribosomal subunit protein uS13 of Bradyrhizobium sp. (strain ORS 278).